The primary structure comprises 590 residues: Myo-inositol transporter 3C (590 aa).

Residues Met1 to Cys63 lie on the Cytoplasmic side of the membrane. A helical membrane pass occupies residues Phe64–Ala86. Residues Leu87–Glu105 lie on the Extracellular side of the membrane. The chain crosses the membrane as a helical span at residues Ile106–Gly126. Residues Asp127 to Lys132 are Cytoplasmic-facing. A helical membrane pass occupies residues Val133–Tyr153. Topologically, residues Ser154–Arg162 are extracellular. Residues Ile163–Thr183 form a helical membrane-spanning segment. Topologically, residues Ala184 to Cys192 are cytoplasmic. Residues Ile193–Gly213 form a helical membrane-spanning segment. Topologically, residues Val214–Arg222 are extracellular. The chain crosses the membrane as a helical span at residues Leu223–Pro243. Over Glu244–Gln325 the chain is Cytoplasmic. A helical transmembrane segment spans residues Leu326–Thr346. At Asn347–Ala349 the chain is on the extracellular side. Residues Leu350–Val370 form a helical membrane-spanning segment. Residues Asp371 to Arg376 lie on the Cytoplasmic side of the membrane. The helical transmembrane segment at Gly377–Phe397 threads the bilayer. The Extracellular portion of the chain corresponds to His398 to Lys417. The chain crosses the membrane as a helical span at residues Leu418–Ser438. The Cytoplasmic portion of the chain corresponds to His439 to Ser454. Residues Val455 to Tyr475 traverse the membrane as a helical segment. The Extracellular portion of the chain corresponds to Leu476–Ser485. Residues Gly486–Tyr506 form a helical membrane-spanning segment. Topologically, residues Pro507–Arg590 are cytoplasmic.

The protein belongs to the major facilitator superfamily. Sugar transporter (TC 2.A.1.1) family.

It is found in the cell membrane. It carries out the reaction myo-inositol(out) + H(+)(out) = myo-inositol(in) + H(+)(in). Functionally, major transporter for myo-inositol. Plays a role in the traversal of the host blood-brain barrier. The protein is Myo-inositol transporter 3C of Cryptococcus neoformans var. grubii serotype A (strain H99 / ATCC 208821 / CBS 10515 / FGSC 9487) (Filobasidiella neoformans var. grubii).